A 365-amino-acid chain; its full sequence is Succinyl-diaminopimelate desuccinylase (365 aa).

Position 65 (histidine 65) interacts with Zn(2+). Residue aspartate 67 is part of the active site. Residue aspartate 96 participates in Zn(2+) binding. Glutamate 126 (proton acceptor) is an active-site residue. The Zn(2+) site is built by glutamate 127, glutamate 155, and histidine 340.

It belongs to the peptidase M20A family. DapE subfamily. As to quaternary structure, homodimer. The cofactor is Zn(2+). Co(2+) serves as cofactor.

The enzyme catalyses N-succinyl-(2S,6S)-2,6-diaminopimelate + H2O = (2S,6S)-2,6-diaminopimelate + succinate. Its pathway is amino-acid biosynthesis; L-lysine biosynthesis via DAP pathway; LL-2,6-diaminopimelate from (S)-tetrahydrodipicolinate (succinylase route): step 3/3. Catalyzes the hydrolysis of N-succinyl-L,L-diaminopimelic acid (SDAP), forming succinate and LL-2,6-diaminopimelate (DAP), an intermediate involved in the bacterial biosynthesis of lysine and meso-diaminopimelic acid, an essential component of bacterial cell walls. This Campylobacter jejuni subsp. jejuni serotype O:2 (strain ATCC 700819 / NCTC 11168) protein is Succinyl-diaminopimelate desuccinylase.